The chain runs to 187 residues: MTTTEKIQPRLKVRYREEIKDALAKEFNYANVMQIPGVVKVVVNMGVGDAARDAKLINGAVEDLALITGQKPQIRKATKSIAQFKLREGMPIGAKVTLRGDRMWEFLDRLVSIALPRIRDFRGLSPKQFDGNGNYTFGLSEQSMFHEIDVDKIDRPRGMDITVVTTATNNEEGRALLKHLGFPFKEN.

It belongs to the universal ribosomal protein uL5 family. In terms of assembly, part of the 50S ribosomal subunit; part of the 5S rRNA/L5/L18/L25 subcomplex. Contacts the 5S rRNA and the P site tRNA. Forms a bridge to the 30S subunit in the 70S ribosome.

In terms of biological role, this is one of the proteins that bind and probably mediate the attachment of the 5S RNA into the large ribosomal subunit, where it forms part of the central protuberance. In the 70S ribosome it contacts protein S13 of the 30S subunit (bridge B1b), connecting the 2 subunits; this bridge is implicated in subunit movement. Contacts the P site tRNA; the 5S rRNA and some of its associated proteins might help stabilize positioning of ribosome-bound tRNAs. The chain is Large ribosomal subunit protein uL5 from Nocardia farcinica (strain IFM 10152).